The following is a 104-amino-acid chain: Large ribosomal subunit protein uL24 (104 aa).

This sequence belongs to the universal ribosomal protein uL24 family. In terms of assembly, part of the 50S ribosomal subunit.

Its function is as follows. One of two assembly initiator proteins, it binds directly to the 5'-end of the 23S rRNA, where it nucleates assembly of the 50S subunit. In terms of biological role, one of the proteins that surrounds the polypeptide exit tunnel on the outside of the subunit. The sequence is that of Large ribosomal subunit protein uL24 from Bartonella henselae (strain ATCC 49882 / DSM 28221 / CCUG 30454 / Houston 1) (Rochalimaea henselae).